The sequence spans 812 residues: Probable inorganic carbon transporter subunit DabA (812 aa).

4 residues coordinate Zn(2+): Cys-337, Asp-339, His-499, and Cys-514.

The protein belongs to the inorganic carbon transporter (TC 9.A.2) DabA family. As to quaternary structure, forms a complex with DabB. Zn(2+) serves as cofactor.

Its subcellular location is the cell inner membrane. Functionally, part of an energy-coupled inorganic carbon pump. The protein is Probable inorganic carbon transporter subunit DabA of Xanthomonas oryzae pv. oryzae (strain MAFF 311018).